Consider the following 353-residue polypeptide: Ribosome biogenesis protein BRX1 homolog (353 aa).

Positions 1–10 (MAATKRKRRG) are enriched in basic residues. The tract at residues 1-46 (MAATKRKRRGGFAVQAKKPKRNEKDAEPPAKRHATAEEVEEEERDR) is disordered. The segment covering 22–36 (NEKDAEPPAKRHATA) has biased composition (basic and acidic residues). Residues 60–249 (ERILIFSSRG…LIKIFQGSFG (190 aa)) enclose the Brix domain. Lys-160 is covalently cross-linked (Glycyl lysine isopeptide (Lys-Gly) (interchain with G-Cter in SUMO2)). Ser-261 is subject to Phosphoserine. Lys-276 bears the N6-acetyllysine mark. Glycyl lysine isopeptide (Lys-Gly) (interchain with G-Cter in SUMO2) cross-links involve residues Lys-314 and Lys-322.

Belongs to the BRX1 family.

It is found in the nucleus. The protein resides in the nucleolus. Its function is as follows. Required for biogenesis of the 60S ribosomal subunit. The polypeptide is Ribosome biogenesis protein BRX1 homolog (BRIX1) (Pongo abelii (Sumatran orangutan)).